A 311-amino-acid polypeptide reads, in one-letter code: Probable manganese-dependent inorganic pyrophosphatase (311 aa).

The Mn(2+) site is built by histidine 9, aspartate 13, aspartate 15, aspartate 75, histidine 97, and aspartate 149.

This sequence belongs to the PPase class C family. Mn(2+) is required as a cofactor.

Its subcellular location is the cytoplasm. The catalysed reaction is diphosphate + H2O = 2 phosphate + H(+). The chain is Probable manganese-dependent inorganic pyrophosphatase from Lactobacillus johnsonii (strain CNCM I-12250 / La1 / NCC 533).